Consider the following 141-residue polypeptide: MLMPKKTKYRKQQKGRNRGKAYNGNSLAFGTIGIKALEHGRIDSRQIEAARVAMTRKVKRTGKIWIRVFPDKPLTKKPLETRMGKGKGSVEKWVMNIKPGRIIYEMAGVEESLAREALDLARYKLPFKTKIVTQESENEIY.

Over residues Met-1–Gly-19 the composition is skewed to basic residues. The tract at residues Met-1–Tyr-22 is disordered.

This sequence belongs to the universal ribosomal protein uL16 family. In terms of assembly, part of the 50S ribosomal subunit.

In terms of biological role, binds 23S rRNA and is also seen to make contacts with the A and possibly P site tRNAs. The polypeptide is Large ribosomal subunit protein uL16 (Nitratiruptor sp. (strain SB155-2)).